We begin with the raw amino-acid sequence, 197 residues long: Ribonuclease HII (197 aa).

The region spanning 14–197 (EKIVGIDEAG…RSFNLGVNDD (184 aa)) is the RNase H type-2 domain. The a divalent metal cation site is built by D20, E21, and D112.

Belongs to the RNase HII family. Requires Mn(2+) as cofactor. It depends on Mg(2+) as a cofactor.

The protein localises to the cytoplasm. The catalysed reaction is Endonucleolytic cleavage to 5'-phosphomonoester.. In terms of biological role, endonuclease that specifically degrades the RNA of RNA-DNA hybrids. This chain is Ribonuclease HII, found in Sulfurihydrogenibium sp. (strain YO3AOP1).